A 704-amino-acid polypeptide reads, in one-letter code: Elongation factor G 1 (704 aa).

One can recognise a tr-type G domain in the interval 8–285 (EKIRNIGISA…AVCAFLPNPK (278 aa)). Residues 17–24 (AHIDSGKT), 84–88 (DTPGH), and 138–141 (NKMD) contribute to the GTP site.

This sequence belongs to the TRAFAC class translation factor GTPase superfamily. Classic translation factor GTPase family. EF-G/EF-2 subfamily.

It is found in the cytoplasm. Functionally, catalyzes the GTP-dependent ribosomal translocation step during translation elongation. During this step, the ribosome changes from the pre-translocational (PRE) to the post-translocational (POST) state as the newly formed A-site-bound peptidyl-tRNA and P-site-bound deacylated tRNA move to the P and E sites, respectively. Catalyzes the coordinated movement of the two tRNA molecules, the mRNA and conformational changes in the ribosome. In Myxococcus xanthus (strain DK1622), this protein is Elongation factor G 1.